A 568-amino-acid chain; its full sequence is MSHSVEDIKSESRRLRGSLEQSLADAVTGALREDDQTLIKYHGSYQQDDRDIRDERRQQKLEPAYQFMIRTRTPGGVITPAQWLALDGIATRYANHSLRITTRQAFQFHGVIKRELKATMQAINATLIDTLAACGDVNRNVQVAANPLLSQAHATLYADAACVSEHLLPNTRAYYEIWLDEERVSGSGNEDEPIYGDRYLPRKFKIGFAAPPLNDVDVFANDLGFIAILRDGRLLGYNVSIGGGMGASHGDAQTWPRVANVIGFVTRDQLLDIATAVVTTQRDFGNRAVRKRARFKYTIDDHGLDTIVAEIARRAGFALQPAQPFAFEHNGDRYGWVEGEDGLWHLTLSLPAGRIADTDTATHLSGLRAIAQLNVGEFRMTPNQNLVIAGVPASERARVDALVAQYALDAGNRSASALARGAMACVALPTCGLAMAEAERYLPDFSAALQPLLQQHGLADTPIVLRLSGCPNGCSRPYLAEIALVGKAPGRYNLMLGGDRRGQRLNTLYRENITEPEILAALEPLLARYAAERDHANDEGFGDFLHRAGLIALPSYPTHRRLDLELLA.

Residues Cys-425, Cys-431, Cys-470, and Cys-474 each coordinate [4Fe-4S] cluster. Residue Cys-474 participates in siroheme binding.

Belongs to the nitrite and sulfite reductase 4Fe-4S domain family. Alpha(8)-beta(8). The alpha component is a flavoprotein, the beta component is a hemoprotein. Siroheme serves as cofactor. Requires [4Fe-4S] cluster as cofactor.

The catalysed reaction is hydrogen sulfide + 3 NADP(+) + 3 H2O = sulfite + 3 NADPH + 4 H(+). It functions in the pathway sulfur metabolism; hydrogen sulfide biosynthesis; hydrogen sulfide from sulfite (NADPH route): step 1/1. Functionally, component of the sulfite reductase complex that catalyzes the 6-electron reduction of sulfite to sulfide. This is one of several activities required for the biosynthesis of L-cysteine from sulfate. This Xanthomonas oryzae pv. oryzae (strain MAFF 311018) protein is Sulfite reductase [NADPH] hemoprotein beta-component.